Here is a 225-residue protein sequence, read N- to C-terminus: Uridine kinase (225 aa).

12 to 19 is an ATP binding site; that stretch reads GGTGAGKT.

It belongs to the uridine kinase family.

The protein localises to the cytoplasm. It carries out the reaction uridine + ATP = UMP + ADP + H(+). It catalyses the reaction cytidine + ATP = CMP + ADP + H(+). Its pathway is pyrimidine metabolism; CTP biosynthesis via salvage pathway; CTP from cytidine: step 1/3. It participates in pyrimidine metabolism; UMP biosynthesis via salvage pathway; UMP from uridine: step 1/1. The chain is Uridine kinase from Halobacterium salinarum (strain ATCC 700922 / JCM 11081 / NRC-1) (Halobacterium halobium).